Here is a 520-residue protein sequence, read N- to C-terminus: Cholesterol side-chain cleavage enzyme, mitochondrial (520 aa).

The transit peptide at 1 to 36 (MLAKGLSLRSVLAKGCQPFLSPTWQSSVLATGGGAN) directs the protein to the mitochondrion. C458 serves as a coordination point for heme.

The protein belongs to the cytochrome P450 family. Interacts with FDX1/adrenodoxin. Heme serves as cofactor.

It is found in the mitochondrion inner membrane. The catalysed reaction is 6 reduced [adrenodoxin] + cholesterol + 3 O2 + 6 H(+) = 4-methylpentanal + pregnenolone + 6 oxidized [adrenodoxin] + 4 H2O. It catalyses the reaction 2 reduced [adrenodoxin] + cholesterol + O2 + 2 H(+) = (22R)-hydroxycholesterol + 2 oxidized [adrenodoxin] + H2O. The enzyme catalyses (22R)-hydroxycholesterol + 2 reduced [adrenodoxin] + O2 + 2 H(+) = (20R,22R)-20,22-dihydroxycholesterol + 2 oxidized [adrenodoxin] + H2O. It carries out the reaction (20R,22R)-20,22-dihydroxycholesterol + 2 reduced [adrenodoxin] + O2 + 2 H(+) = 4-methylpentanal + pregnenolone + 2 oxidized [adrenodoxin] + 2 H2O. It functions in the pathway lipid metabolism; C21-steroid hormone metabolism. The protein operates within steroid metabolism; cholesterol metabolism. A cytochrome P450 monooxygenase that catalyzes the side-chain hydroxylation and cleavage of cholesterol to pregnenolone, the precursor of most steroid hormones. Catalyzes three sequential oxidation reactions of cholesterol, namely the hydroxylation at C22 followed with the hydroxylation at C20 to yield 20R,22R-hydroxycholesterol that is further cleaved between C20 and C22 to yield the C21-steroid pregnenolone and 4-methylpentanal. Mechanistically, uses molecular oxygen inserting one oxygen atom into a substrate and reducing the second into a water molecule. Two electrons are provided by NADPH via a two-protein mitochondrial transfer system comprising flavoprotein FDXR (adrenodoxin/ferredoxin reductase) and nonheme iron-sulfur protein FDX1 or FDX2 (adrenodoxin/ferredoxin). The sequence is that of Cholesterol side-chain cleavage enzyme, mitochondrial (CYP11A1) from Mesocricetus auratus (Golden hamster).